Reading from the N-terminus, the 1523-residue chain is Slit homolog 3 protein (1523 aa).

A signal peptide spans 1–33 (MALGRTGAGAAVRARLALGLALASILSGPPAAA). An LRRNT domain is found at 34–61 (CPTKCTCSAASVDCHGLGLRAVPRGIPR). 6 LRR repeats span residues 62 to 83 (NAER…DFAG), 86 to 107 (NLRV…AFQD), 110 to 131 (QLER…LFQS), 134 to 155 (KLTR…AFRG), 158 to 179 (GVKN…AFRA), and 182 to 203 (DLEI…SFNH). N-linked (GlcNAc...) asparagine glycosylation is present at Asn72. An N-linked (GlcNAc...) asparagine glycan is attached at Asn192. In terms of domain architecture, LRRCT 1 spans 215–265 (NHLYCDCHLAWLSDWLRQRRTIGQFTLCMAPVHLRGFSVADVQKKEYVCPG). Residues 271–307 (PACNANSLSCPSACSCSNNIVDCRGKGLTEIPANLPE) enclose the LRRNT 2 domain. Cys284 and Cys293 are oxidised to a cystine. LRR repeat units follow at residues 308 to 329 (GIVE…AFTQ), 332 to 353 (KLKR…AFQG), 356 to 377 (SLTS…LFDG), 380 to 401 (SLQL…TFQD), and 404 to 425 (NLNL…LFVP). The LRRCT 2 domain occupies 437–487 (NPFVCDCHLKWLADYLQDNPIETSGARCSSPRRLANKRISQIKSKKFRCSG). 4 disulfides stabilise this stretch: Cys441–Cys464, Cys443–Cys485, Cys505–Cys511, and Cys509–Cys518. The LRRNT 3 domain occupies 496 to 532 (SSECFMDLVCPEKCRCEGTIVDCSNQKLARIPSHLPE). 5 LRR repeats span residues 533–554 (YTTD…GIFK), 558–579 (NLRK…AFDG), 582–603 (GVQE…MFRG), 606–627 (SLKT…TFAG), and 630–651 (SVRL…AFTT). Asn563 carries N-linked (GlcNAc...) asparagine glycosylation. Asn622 carries an N-linked (GlcNAc...) asparagine glycan. The LRRCT 3 domain occupies 663 to 713 (NPFNCNCHMAWLGRWLRKRRIVSGNPRCQKPFFLKEIPIQDVAIQDFTCDG). Intrachain disulfides connect Cys667–Cys690 and Cys669–Cys711. The LRRNT 4 domain maps to 716–752 (ESSCQLSPRCPEQCTCVETVVRCSNRGLHALPKGMPK). LRR repeat units follow at residues 753–774 (DVTE…LSAF), 776–797 (QLTL…TFSN), 800–821 (HLST…AFNG), and 824–845 (SLRV…SFND). 3 N-linked (GlcNAc...) asparagine glycosylation sites follow: Asn784, Asn792, and Asn797. The 51-residue stretch at 857–907 (NPLHCDCSLRWLSEWVKAGYKEPGIARCSSPESMADRLLLTTPTHRFQCKG) folds into the LRRCT 4 domain. 6 EGF-like domains span residues 918 to 953 (NACL…KDCT), 955 to 994 (PINT…QRCE), 996 to 1032 (NPDD…ELCD), 1034 to 1072 (VIDY…KLCE), 1074 to 1110 (NNDD…LFCE), and 1119 to 1155 (QTSP…PRCE). Disulfide bonds link Cys920-Cys931, Cys925-Cys941, Cys943-Cys952, Cys959-Cys970, Cys964-Cys982, Cys984-Cys993, Cys1000-Cys1011, Cys1005-Cys1020, Cys1022-Cys1031, Cys1038-Cys1051, Cys1045-Cys1060, Cys1062-Cys1071, Cys1078-Cys1089, Cys1083-Cys1098, Cys1100-Cys1109, Cys1123-Cys1134, Cys1128-Cys1143, and Cys1145-Cys1154. Residue Asn928 is glycosylated (N-linked (GlcNAc...) asparagine). N-linked (GlcNAc...) asparagine glycosylation is present at Asn1025. Residues 1158–1332 (ITVNFVGKDS…PQSLGVSPGC (175 aa)) enclose the Laminin G-like domain. Residues Asn1181 and Asn1247 are each glycosylated (N-linked (GlcNAc...) asparagine). Intrachain disulfides connect Cys1305–Cys1332, Cys1355–Cys1364, Cys1372–Cys1382, Cys1377–Cys1391, and Cys1393–Cys1402. 2 EGF-like domains span residues 1340–1365 (HGLC…PLCD) and 1368–1403 (ARDP…ALCD). A glycan (N-linked (GlcNAc...) asparagine) is linked at Asn1406. One can recognise an EGF-like 9 domain in the interval 1408-1444 (SASACSAFKCHHGQCHISDRGEPYCLCQPGFSGHHCE). 7 disulfide bridges follow: Cys1412–Cys1422, Cys1417–Cys1432, Cys1434–Cys1443, Cys1449–Cys1487, Cys1467–Cys1501, Cys1478–Cys1517, and Cys1482–Cys1519. One can recognise a CTCK domain in the interval 1449–1523 (CMGEIVREAI…HLECGCRACS (75 aa)).

It is found in the secreted. In terms of biological role, may act as molecular guidance cue in cellular migration, and function may be mediated by interaction with roundabout homolog receptors. The polypeptide is Slit homolog 3 protein (Slit3) (Mus musculus (Mouse)).